The sequence spans 475 residues: Ribulose bisphosphate carboxylase large chain (475 aa).

Positions 1–2 are excised as a propeptide; that stretch reads MS. N-acetylproline is present on P3. Position 14 is an N6,N6,N6-trimethyllysine (K14). The substrate site is built by N123 and T173. The Proton acceptor role is filled by K175. K177 serves as a coordination point for substrate. Mg(2+) contacts are provided by K201, D203, and E204. K201 is modified (N6-carboxylysine). H294 functions as the Proton acceptor in the catalytic mechanism. Substrate is bound by residues R295, H327, and S379.

It belongs to the RuBisCO large chain family. Type I subfamily. As to quaternary structure, heterohexadecamer of 8 large chains and 8 small chains; disulfide-linked. The disulfide link is formed within the large subunit homodimers. Requires Mg(2+) as cofactor. Post-translationally, the disulfide bond which can form in the large chain dimeric partners within the hexadecamer appears to be associated with oxidative stress and protein turnover.

It localises to the plastid. The protein resides in the chloroplast. It carries out the reaction 2 (2R)-3-phosphoglycerate + 2 H(+) = D-ribulose 1,5-bisphosphate + CO2 + H2O. The catalysed reaction is D-ribulose 1,5-bisphosphate + O2 = 2-phosphoglycolate + (2R)-3-phosphoglycerate + 2 H(+). Its function is as follows. RuBisCO catalyzes two reactions: the carboxylation of D-ribulose 1,5-bisphosphate, the primary event in carbon dioxide fixation, as well as the oxidative fragmentation of the pentose substrate in the photorespiration process. Both reactions occur simultaneously and in competition at the same active site. The sequence is that of Ribulose bisphosphate carboxylase large chain from Magnolia acuminata (Cucumber tree).